The sequence spans 832 residues: WD repeat-containing protein 75 (832 aa).

13 WD repeats span residues 4 to 43, 47 to 86, 90 to 134, 148 to 187, 196 to 233, 239 to 278, 281 to 320, 326 to 364, 378 to 425, 432 to 474, 485 to 523, 527 to 567, and 572 to 609; these read KTDI…KVYS, EEWL…KLWD, GILI…QLVA, KELS…YFFR, LKAT…RLWR, KEYT…VQWQ, DMSK…SIIE, SGLI…QFYS, QQEY…KLWA, SFVL…KAWC, YWSC…TLWS, WELL…CCWN, and ALEW…FVFK. Disordered stretches follow at residues 704–723 and 759–811; these read QHKL…HTQG and VREE…AQER. Residues 764–785 are compositionally biased toward acidic residues; the sequence is DSSEQEMDSEKEEEESEEEMEA. Over residues 799–811 the composition is skewed to basic and acidic residues; the sequence is DEQKPKLSKAQER.

As to quaternary structure, component of the proposed t-UTP subcomplex of the ribosomal small subunit (SSU) processome. SSU processome is composed of more than 70 proteins and the RNA chaperone small nucleolar RNA (snoRNA) U3.

The protein localises to the nucleus. It localises to the nucleolus. Its function is as follows. Ribosome biogenesis factor. Part of the small subunit (SSU) processome, first precursor of the small eukaryotic ribosomal subunit. During the assembly of the SSU processome in the nucleolus, many ribosome biogenesis factors, an RNA chaperone and ribosomal proteins associate with the nascent pre-rRNA and work in concert to generate RNA folding, modifications, rearrangements and cleavage as well as targeted degradation of pre-ribosomal RNA by the RNA exosome. Involved in nucleolar processing of pre-18S ribosomal RNA. Required for optimal pre-ribosomal RNA transcription by RNA polymerase I. This chain is WD repeat-containing protein 75 (wdr75), found in Danio rerio (Zebrafish).